Reading from the N-terminus, the 427-residue chain is Dihydroorotase (427 aa).

The Zn(2+) site is built by His60 and His62. Substrate is bound by residues 62 to 64 (HFR) and Asn94. Zn(2+)-binding residues include Asp152, His179, and His232. Asn278 contributes to the substrate binding site. Asp305 is a binding site for Zn(2+). The active site involves Asp305. Substrate is bound by residues His309 and 323 to 324 (FG).

Belongs to the metallo-dependent hydrolases superfamily. DHOase family. Class I DHOase subfamily. Zn(2+) serves as cofactor.

The enzyme catalyses (S)-dihydroorotate + H2O = N-carbamoyl-L-aspartate + H(+). It functions in the pathway pyrimidine metabolism; UMP biosynthesis via de novo pathway; (S)-dihydroorotate from bicarbonate: step 3/3. Catalyzes the reversible cyclization of carbamoyl aspartate to dihydroorotate. The sequence is that of Dihydroorotase from Enterococcus faecalis (strain ATCC 700802 / V583).